The chain runs to 322 residues: RING finger protein 113B (322 aa).

The tract at residues 24–92 is disordered; it reads KPGRKGAAGL…EEAAPESLDV (69 aa). Positions 46–60 are enriched in low complexity; sequence SSSSGDEGDTVAQPP. The C3H1-type zinc finger occupies 190-218; the sequence is DYQPDICKDYKETGFCGFGDSCKFLHDRS. The segment at 256-294 adopts an RING-type zinc-finger fold; the sequence is CFICRQAFQNPVVTKCRHYFCESCALEHFRATPRCYICD.

The chain is RING finger protein 113B (RNF113B) from Homo sapiens (Human).